The chain runs to 580 residues: 2-succinyl-5-enolpyruvyl-6-hydroxy-3-cyclohexene-1-carboxylate synthase (580 aa).

Residues 178–199 are disordered; sequence LEPTPMPGDLTEPPAAAQPRDD.

Belongs to the TPP enzyme family. MenD subfamily. Homodimer. It depends on Mg(2+) as a cofactor. The cofactor is Mn(2+). Thiamine diphosphate is required as a cofactor.

The enzyme catalyses isochorismate + 2-oxoglutarate + H(+) = 5-enolpyruvoyl-6-hydroxy-2-succinyl-cyclohex-3-ene-1-carboxylate + CO2. The protein operates within quinol/quinone metabolism; 1,4-dihydroxy-2-naphthoate biosynthesis; 1,4-dihydroxy-2-naphthoate from chorismate: step 2/7. Its pathway is quinol/quinone metabolism; menaquinone biosynthesis. In terms of biological role, catalyzes the thiamine diphosphate-dependent decarboxylation of 2-oxoglutarate and the subsequent addition of the resulting succinic semialdehyde-thiamine pyrophosphate anion to isochorismate to yield 2-succinyl-5-enolpyruvyl-6-hydroxy-3-cyclohexene-1-carboxylate (SEPHCHC). The chain is 2-succinyl-5-enolpyruvyl-6-hydroxy-3-cyclohexene-1-carboxylate synthase from Roseiflexus castenholzii (strain DSM 13941 / HLO8).